Here is a 402-residue protein sequence, read N- to C-terminus: Tryptophan--tRNA ligase, cytoplasmic (402 aa).

The 'HIGH' region motif lies at 97 to 106 (PSSEALHLGH). The 'KMSKS' region motif lies at 280 to 284 (KMSAS).

It belongs to the class-I aminoacyl-tRNA synthetase family.

It is found in the cytoplasm. It localises to the cytosol. It catalyses the reaction tRNA(Trp) + L-tryptophan + ATP = L-tryptophyl-tRNA(Trp) + AMP + diphosphate + H(+). The sequence is that of Tryptophan--tRNA ligase, cytoplasmic from Arabidopsis thaliana (Mouse-ear cress).